The sequence spans 179 residues: Large ribosomal subunit protein uL6 (179 aa).

Belongs to the universal ribosomal protein uL6 family. Part of the 50S ribosomal subunit.

Functionally, this protein binds to the 23S rRNA, and is important in its secondary structure. It is located near the subunit interface in the base of the L7/L12 stalk, and near the tRNA binding site of the peptidyltransferase center. The polypeptide is Large ribosomal subunit protein uL6 (Bifidobacterium longum subsp. infantis (strain ATCC 15697 / DSM 20088 / JCM 1222 / NCTC 11817 / S12)).